Reading from the N-terminus, the 312-residue chain is DNA-directed RNA polymerase subunit alpha (312 aa).

The segment at 1–229 (MLQYQIDRID…ELFQPLATVT (229 aa)) is alpha N-terminal domain (alpha-NTD). Residues 246–312 (IPLEELNLSV…ISIPQSRTSV (67 aa)) form an alpha C-terminal domain (alpha-CTD) region.

Belongs to the RNA polymerase alpha chain family. In terms of assembly, in cyanobacteria the RNAP catalytic core is composed of 2 alpha, 1 beta, 1 beta', 1 gamma and 1 omega subunit. When a sigma factor is associated with the core the holoenzyme is formed, which can initiate transcription.

It catalyses the reaction RNA(n) + a ribonucleoside 5'-triphosphate = RNA(n+1) + diphosphate. Functionally, DNA-dependent RNA polymerase catalyzes the transcription of DNA into RNA using the four ribonucleoside triphosphates as substrates. The protein is DNA-directed RNA polymerase subunit alpha of Prochlorococcus marinus subsp. pastoris (strain CCMP1986 / NIES-2087 / MED4).